The sequence spans 108 residues: Thiosulfate sulfurtransferase GlpE (108 aa).

Positions 18–106 constitute a Rhodanese domain; it reads ENEGATLADI…WERSGLPIET (89 aa). Cys-66 (cysteine persulfide intermediate) is an active-site residue.

This sequence belongs to the GlpE family.

It localises to the cytoplasm. The catalysed reaction is thiosulfate + hydrogen cyanide = thiocyanate + sulfite + 2 H(+). It carries out the reaction thiosulfate + [thioredoxin]-dithiol = [thioredoxin]-disulfide + hydrogen sulfide + sulfite + 2 H(+). In terms of biological role, transferase that catalyzes the transfer of sulfur from thiosulfate to thiophilic acceptors such as cyanide or dithiols. May function in a CysM-independent thiosulfate assimilation pathway by catalyzing the conversion of thiosulfate to sulfite, which can then be used for L-cysteine biosynthesis. The sequence is that of Thiosulfate sulfurtransferase GlpE from Actinobacillus pleuropneumoniae serotype 3 (strain JL03).